The following is a 140-amino-acid chain: Putative pre-16S rRNA nuclease (140 aa).

It belongs to the YqgF nuclease family.

Its subcellular location is the cytoplasm. In terms of biological role, could be a nuclease involved in processing of the 5'-end of pre-16S rRNA. In Chlorobium chlorochromatii (strain CaD3), this protein is Putative pre-16S rRNA nuclease.